We begin with the raw amino-acid sequence, 49 residues long: ADTIVAVELDSYPNTDIGDPNYPHISIADENSLHFSFHKFSQNPKDLIL.

The protein belongs to the leguminous lectin family. In terms of assembly, homotetramer. In terms of processing, the beta and gamma chains are produced by partial proteolytic processing of the lectin alpha chain by an asparaginyl endopeptidase. Mixture of 60% alpha lectin and 40% of its beta and gamma proteolytic fragments. As to expression, seed.

Its function is as follows. D-mannose/D-glucose-binding lectin. This chain is Lectin alpha chain, found in Dioclea violacea.